The following is a 246-amino-acid chain: tRNA (guanine-N(7)-)-methyltransferase (246 aa).

The segment at 1 to 26 (MSDSSSSSENAPATPESPGRPPRGIK) is disordered. 4 residues coordinate S-adenosyl-L-methionine: Glu74, Glu99, Asp126, and Asp149. The active site involves Asp149. Residues Lys153, Asp185, and 224-227 (TKFE) each bind substrate.

The protein belongs to the class I-like SAM-binding methyltransferase superfamily. TrmB family.

It carries out the reaction guanosine(46) in tRNA + S-adenosyl-L-methionine = N(7)-methylguanosine(46) in tRNA + S-adenosyl-L-homocysteine. It functions in the pathway tRNA modification; N(7)-methylguanine-tRNA biosynthesis. Its function is as follows. Catalyzes the formation of N(7)-methylguanine at position 46 (m7G46) in tRNA. In Chromohalobacter salexigens (strain ATCC BAA-138 / DSM 3043 / CIP 106854 / NCIMB 13768 / 1H11), this protein is tRNA (guanine-N(7)-)-methyltransferase.